The primary structure comprises 254 residues: Protein GltF (254 aa).

Residues 1-25 form the signal peptide; it reads MFFKKNLTTAAICAALSVAAFSAMA. Residues 213–229 traverse the membrane as a helical segment; that stretch reads PVAITAVTFPLLIDAAV.

It to E.coli YhcF.

The protein resides in the cell membrane. Involved in induction of the so-called NTR enzymes in response to nitrogen deprivation, as well as in glutamate biosynthesis. May mediate the glutamate-dependent repression of the GLT operon. This chain is Protein GltF (gltF), found in Escherichia coli (strain K12).